Reading from the N-terminus, the 342-residue chain is D-erythrose-4-phosphate dehydrogenase (342 aa).

12–13 (RI) lines the NAD(+) pocket. Substrate-binding positions include 154-156 (SCT), R200, 213-214 (TK), and R236. The Nucleophile role is filled by C155. N318 contacts NAD(+).

The protein belongs to the glyceraldehyde-3-phosphate dehydrogenase family. Epd subfamily. As to quaternary structure, homotetramer.

The protein resides in the cytoplasm. It catalyses the reaction D-erythrose 4-phosphate + NAD(+) + H2O = 4-phospho-D-erythronate + NADH + 2 H(+). The protein operates within cofactor biosynthesis; pyridoxine 5'-phosphate biosynthesis; pyridoxine 5'-phosphate from D-erythrose 4-phosphate: step 1/5. In terms of biological role, catalyzes the NAD-dependent conversion of D-erythrose 4-phosphate to 4-phosphoerythronate. This chain is D-erythrose-4-phosphate dehydrogenase, found in Klebsiella pneumoniae subsp. pneumoniae (strain ATCC 700721 / MGH 78578).